Here is a 541-residue protein sequence, read N- to C-terminus: Arginine--tRNA ligase (541 aa).

The 'HIGH' region signature appears at 119-129 (ANPTGPLHIGH).

It belongs to the class-I aminoacyl-tRNA synthetase family. In terms of assembly, monomer.

The protein resides in the cytoplasm. The catalysed reaction is tRNA(Arg) + L-arginine + ATP = L-arginyl-tRNA(Arg) + AMP + diphosphate. The sequence is that of Arginine--tRNA ligase from Helicobacter pylori (strain HPAG1).